A 38-amino-acid polypeptide reads, in one-letter code: Large ribosomal subunit protein bL36 (38 aa).

The protein belongs to the bacterial ribosomal protein bL36 family.

In Kosmotoga olearia (strain ATCC BAA-1733 / DSM 21960 / TBF 19.5.1), this protein is Large ribosomal subunit protein bL36.